A 308-amino-acid polypeptide reads, in one-letter code: MASSHNVLMRLVASAYSIAQKAGTIVRCVIAEGDLGIVQKTSATDLQTKADRMVQMSICSSLSRKFPKLTIIGEEDLPPGEVDQELIEDGQSEEILKQPCPSQYSAIKEEDLVVWVDPVDGTKEYTEGLLDNVTVLIGIAYEGKAIAGIINQPYYNYQAGPDAVLGRTIWGVLGLGAFGFQLKEAPAGKHIITTTRSHSNKLVTDCIAAMNPDNVLRVGGAGNKIIQLIEGKASAYVFASPGCKKWDTCAPEVILHAVGGKLTDIHGNPLQYDKEVKHMNSAGVLAALRNYEYYASRVPESVKSALIP.

A2 is subject to N-acetylalanine. Catalysis depends on D51, which acts as the Proton acceptor. E74, D117, V119, and D120 together coordinate Mg(2+). Catalysis depends on T122, which acts as the Proton acceptor. Phosphothreonine is present on T122. 4 residues coordinate AMP: T195, H198, G220, and K224. S240 is modified (phosphoserine). Residue K244 is modified to N6-succinyllysine. Position 247 (D247) interacts with Mg(2+).

Belongs to the inositol monophosphatase superfamily. Requires Mg(2+) as cofactor. As to expression, highly expressed in heart, brain, spleen, lung, liver, skeletal muscle, kidney and testis.

The catalysed reaction is adenosine 3',5'-bisphosphate + H2O = AMP + phosphate. It carries out the reaction adenosine 2',5'-bisphosphate + H2O = AMP + phosphate. The enzyme catalyses 3'-phosphoadenylyl sulfate + H2O = adenosine 5'-phosphosulfate + phosphate. It catalyses the reaction 1D-myo-inositol 1,4-bisphosphate + H2O = 1D-myo-inositol 4-phosphate + phosphate. The catalysed reaction is 1D-myo-inositol 1,3,4-trisphosphate + H2O = 1D-myo-inositol 3,4-bisphosphate + phosphate. With respect to regulation, inhibited by Li(+) and Ca(2+), but not by Na(+). In terms of biological role, phosphatase that converts 3'(2')-phosphoadenosine 5'-phosphate (PAP) to AMP and adenosine 3'-phosphate 5'-phosphosulfate (PAPS) to adenosine 5'-phosphosulfate (APS). Is also able to hydrolyze inositol 1,4-bisphosphate (Ins(1,4)P2) and inositol 1,3,4-trisphosphate (Ins(1,3,4)P3), but is not active on AMP, 3'-AMP, fructose-1,6-bisphosphate, Ins(1)P, Ins(2)P and Ins(1,4,5)P3. Probably prevents the toxic accumulation of PAP, a compound which inhibits a variety of proteins, including PAPS-utilizing enzymes such as sulfotransferases, and RNA processing enzymes. Could also play a role in inositol recycling and phosphoinositide metabolism. The protein is 3'(2'),5'-bisphosphate nucleotidase 1 (Bpnt1) of Rattus norvegicus (Rat).